A 101-amino-acid polypeptide reads, in one-letter code: Large ribosomal subunit protein bL27 (101 aa).

The tract at residues 1 to 21 is disordered; sequence MAHKKAGGSSRNGRDSRSKRL.

It belongs to the bacterial ribosomal protein bL27 family.

The sequence is that of Large ribosomal subunit protein bL27 from Buchnera aphidicola subsp. Cinara cedri (strain Cc).